A 368-amino-acid polypeptide reads, in one-letter code: 4-hydroxy-3-methylbut-2-en-1-yl diphosphate synthase (flavodoxin) (368 aa).

Residues cysteine 271, cysteine 274, cysteine 306, and glutamate 313 each coordinate [4Fe-4S] cluster.

The protein belongs to the IspG family. It depends on [4Fe-4S] cluster as a cofactor.

The catalysed reaction is (2E)-4-hydroxy-3-methylbut-2-enyl diphosphate + oxidized [flavodoxin] + H2O + 2 H(+) = 2-C-methyl-D-erythritol 2,4-cyclic diphosphate + reduced [flavodoxin]. Its pathway is isoprenoid biosynthesis; isopentenyl diphosphate biosynthesis via DXP pathway; isopentenyl diphosphate from 1-deoxy-D-xylulose 5-phosphate: step 5/6. Functionally, converts 2C-methyl-D-erythritol 2,4-cyclodiphosphate (ME-2,4cPP) into 1-hydroxy-2-methyl-2-(E)-butenyl 4-diphosphate. The chain is 4-hydroxy-3-methylbut-2-en-1-yl diphosphate synthase (flavodoxin) from Buchnera aphidicola subsp. Acyrthosiphon pisum (strain APS) (Acyrthosiphon pisum symbiotic bacterium).